The sequence spans 248 residues: Triosephosphate isomerase (248 aa).

Residue Asn9–Lys11 participates in substrate binding. Residue His94 is the Electrophile of the active site. Glu166 functions as the Proton acceptor in the catalytic mechanism. Substrate is bound by residues Gly172, Ser212, and Gly233 to Gly234.

This sequence belongs to the triosephosphate isomerase family. In terms of assembly, homodimer.

The protein resides in the cytoplasm. It catalyses the reaction D-glyceraldehyde 3-phosphate = dihydroxyacetone phosphate. It participates in carbohydrate biosynthesis; gluconeogenesis. It functions in the pathway carbohydrate degradation; glycolysis; D-glyceraldehyde 3-phosphate from glycerone phosphate: step 1/1. Functionally, involved in the gluconeogenesis. Catalyzes stereospecifically the conversion of dihydroxyacetone phosphate (DHAP) to D-glyceraldehyde-3-phosphate (G3P). The protein is Triosephosphate isomerase of Alkaliphilus metalliredigens (strain QYMF).